A 494-amino-acid polypeptide reads, in one-letter code: MNRRLPLKLKELSECFRTQTLDPVSATEQILQLANRLQHLNAFIRTSPEKALAQAEKSSTRHKTGKPLSLLDGAPIAVKDNFCTKGIHTTCAARMLENFVPTYNATVYERLARNGAILVGKTNMDQYGMGSGTVDSIFGPTKNYWDAVEGESDFRIAGGSSGGSAVAVASGICFAALGSDTGGSTRNPASYCGVVGFKPTYGLLSRYGLIPLVNSMDVPGILTRTVDDCLAVFNAIAGPDDRDSTTIKTFFKPISLPDASKICLKGLKVGIPIEYHCEGLSDEVLTTWTKVADMLEDAGASVHPVSLPYTSASIFVYSILNQCEVASNMARYDGIEFGHRSDEDASTEQLYAKSRAEGFNGVVKNRILSGNFFLLRKNYDKYFEKALKVRRLIANDFDRAFQEVDILLTPTTLSDAPRYSEFIQSNNRDQCAVQDFCTQPANMGGIPALSLPIRLSEQRLPISLQLMAPNFSEKRLFKVAKWIEEQVKFETNYN.

Catalysis depends on charge relay system residues lysine 79 and serine 160. Serine 184 serves as the catalytic Acyl-ester intermediate.

The protein belongs to the amidase family. GatA subfamily. Subunit of the heterotrimeric GatCAB amidotransferase (AdT) complex, composed of A, B and C subunits.

The protein resides in the mitochondrion. It catalyses the reaction L-glutamyl-tRNA(Gln) + L-glutamine + ATP + H2O = L-glutaminyl-tRNA(Gln) + L-glutamate + ADP + phosphate + H(+). In terms of biological role, allows the formation of correctly charged Gln-tRNA(Gln) through the transamidation of misacylated Glu-tRNA(Gln) in the mitochondria. The reaction takes place in the presence of glutamine and ATP through an activated gamma-phospho-Glu-tRNA(Gln). This is Glutamyl-tRNA(Gln) amidotransferase subunit A, mitochondrial from Aedes aegypti (Yellowfever mosquito).